A 961-amino-acid chain; its full sequence is Leucine--tRNA ligase (961 aa).

Positions 41–51 match the 'HIGH' region motif; the sequence is PYLNGNLHAGH. The short motif at 632–636 is the 'KMSKS' region element; that stretch reads KMSKS. An ATP-binding site is contributed by Lys635.

This sequence belongs to the class-I aminoacyl-tRNA synthetase family.

It localises to the cytoplasm. It carries out the reaction tRNA(Leu) + L-leucine + ATP = L-leucyl-tRNA(Leu) + AMP + diphosphate. This is Leucine--tRNA ligase from Methanosarcina acetivorans (strain ATCC 35395 / DSM 2834 / JCM 12185 / C2A).